Consider the following 459-residue polypeptide: Elongation factor 1-alpha 1 (459 aa).

The tr-type G domain occupies Lys-5–Thr-242. Residues Gly-14–Ser-21 are G1. The G2 stretch occupies residues Gly-70–Asp-74. A G3 region spans residues Asp-91 to Gly-94. The segment at Asn-153–Asp-156 is G4. Positions Ser-194 to Phe-196 are G5. Glu-301 and Glu-374 each carry 5-glutamyl glycerylphosphorylethanolamine.

Belongs to the TRAFAC class translation factor GTPase superfamily. Classic translation factor GTPase family. EF-Tu/EF-1A subfamily.

The protein resides in the cytoplasm. Its function is as follows. This protein promotes the GTP-dependent binding of aminoacyl-tRNA to the A-site of ribosomes during protein biosynthesis. The chain is Elongation factor 1-alpha 1 (eft-1) from Oscheius tipulae.